Consider the following 294-residue polypeptide: Nucleotide-binding protein lp_0779 (294 aa).

12–19 (GMSGAGKT) lines the ATP pocket. 62–65 (DLRS) serves as a coordination point for GTP.

Belongs to the RapZ-like family.

In terms of biological role, displays ATPase and GTPase activities. In Lactiplantibacillus plantarum (strain ATCC BAA-793 / NCIMB 8826 / WCFS1) (Lactobacillus plantarum), this protein is Nucleotide-binding protein lp_0779.